The following is a 545-amino-acid chain: Ubiquitin carboxyl-terminal hydrolase 17-like protein D (545 aa).

The USP domain occupies 51 to 348 (CGLQNTGNSC…NAYVLFYVQQ (298 aa)). The active-site Nucleophile is the Cys-60. His-307 functions as the Proton acceptor in the catalytic mechanism. Disordered stretches follow at residues 367–443 (LDPE…KLGQ) and 521–545 (RQEGRRRSKKGKNKNKQGQKLLLVR). Residues 374 to 385 (KKSRRKKHKKKS) are compositionally biased toward basic residues. Residues 393–404 (EPSKNREKKATK) are compositionally biased toward basic and acidic residues. The segment covering 524–537 (GRRRSKKGKNKNKQ) has biased composition (basic residues).

Belongs to the peptidase C19 family. USP17 subfamily. In terms of tissue distribution, detected in T-cell, myeloid, and embryonic stem cell lines.

It localises to the nucleus. The protein resides in the endoplasmic reticulum. The catalysed reaction is Thiol-dependent hydrolysis of ester, thioester, amide, peptide and isopeptide bonds formed by the C-terminal Gly of ubiquitin (a 76-residue protein attached to proteins as an intracellular targeting signal).. Its function is as follows. Deubiquitinating enzyme that removes conjugated ubiquitin from specific proteins to regulate different cellular processes that may include cell proliferation, progression through the cell cycle, apoptosis, cell migration, and the cellular response to viral infection. This chain is Ubiquitin carboxyl-terminal hydrolase 17-like protein D, found in Mus musculus (Mouse).